Here is a 597-residue protein sequence, read N- to C-terminus: MKLILILIFLFSCILFINCENLIKVLDVRLAQTHVIPVEGKTWNLNNNIQHMSIVGNRRAFLLASFDDPTQTYYTTIWFNDKLVGPLKLNDPSQLPPTEDKGEKYSTVHHSIMLSKEWVKVGMKIQFFTIGNDGNGSSVVKSSDFFYPDVGQDYTLKMWTLPFYLFGANDTNTQPFSKTKGIDSEITKELIEKWSCSDLQAINHPIQKIDWSYFVMEPRNGNPAMVITNSDQKKDGYAIMSGVLNILTQIRKVFGESSSSIQIYSPLLHLDSKGKYADPYGGLGGGSRGTGDYTYKGIFIHEQGHAMGLPHAGEAFDKGTFPYQKGSLSGSEWGFDANHNEFLGNFLPPTAEYYRNCQKSFLIDNKGRCIKQSVMQGGAGDQSSKYRFSMFADYEMTTIQNYFKNSIYYDETNGTYKKWNDTSKSYYDYKPITQNKGLWGIDDGTPIERDIDVYTILFTHSTVGPKELSQIYPLLKSKGNLMRQFDPTNKTEMAIIIPNTGAIPWYCHDSGCDYTVRVTFDDNSLQHVLLQQGKRKYWKPMSDLKDNIMDPKSSDSFMLGGINVKANKKINKVELLETLLGWNGISNNATVLASKSF.

Positions 1 to 19 are cleaved as a signal peptide; sequence MKLILILIFLFSCILFINC. The Peptidase M66 domain maps to 148–409; sequence PDVGQDYTLK…QNYFKNSIYY (262 aa). Residue H301 participates in Zn(2+) binding. Residue E302 is part of the active site. Positions 305 and 311 each coordinate Zn(2+).

This sequence belongs to the dictomallein family. It depends on Zn(2+) as a cofactor.

The protein localises to the secreted. This chain is Dictomallein-3 (dtmlC), found in Dictyostelium discoideum (Social amoeba).